Consider the following 390-residue polypeptide: Elongation factor Ts, mitochondrial (390 aa).

This sequence belongs to the EF-Ts family.

It is found in the mitochondrion. In terms of biological role, associates with the EF-Tu.GDP complex and induces the exchange of GDP to GTP. It remains bound to the aminoacyl-tRNA.EF-Tu.GTP complex up to the GTP hydrolysis stage on the ribosome. In Plasmodium falciparum (isolate 3D7), this protein is Elongation factor Ts, mitochondrial.